Consider the following 308-residue polypeptide: Acetyl-coenzyme A carboxylase carboxyl transferase subunit beta (308 aa).

Residues 26 to 295 (LWIKDPETGE…EQKPLEPEIL (270 aa)) form the CoA carboxyltransferase N-terminal domain.

This sequence belongs to the AccD/PCCB family. Acetyl-CoA carboxylase is a heterohexamer composed of biotin carboxyl carrier protein (AccB), biotin carboxylase (AccC) and two subunits each of ACCase subunit alpha (AccA) and ACCase subunit beta (AccD).

The protein localises to the cytoplasm. It carries out the reaction N(6)-carboxybiotinyl-L-lysyl-[protein] + acetyl-CoA = N(6)-biotinyl-L-lysyl-[protein] + malonyl-CoA. It participates in lipid metabolism; malonyl-CoA biosynthesis; malonyl-CoA from acetyl-CoA: step 1/1. Its function is as follows. Component of the acetyl coenzyme A carboxylase (ACC) complex. Biotin carboxylase (BC) catalyzes the carboxylation of biotin on its carrier protein (BCCP) and then the CO(2) group is transferred by the transcarboxylase to acetyl-CoA to form malonyl-CoA. In Mesorhizobium japonicum (strain LMG 29417 / CECT 9101 / MAFF 303099) (Mesorhizobium loti (strain MAFF 303099)), this protein is Acetyl-coenzyme A carboxylase carboxyl transferase subunit beta.